A 200-amino-acid polypeptide reads, in one-letter code: Small ribosomal subunit protein uS5 (200 aa).

Over residues 1 to 12 the composition is skewed to polar residues; sequence MGRPRTSQTRGQ. Residues 1–49 form a disordered region; the sequence is MGRPRTSQTRGQGPSGATGGNPRGGGSTTRERDARGARPGERDGGSEIQ. The span at 13 to 27 shows a compositional bias: gly residues; that stretch reads GPSGATGGNPRGGGS. Basic and acidic residues predominate over residues 29 to 49; it reads TRERDARGARPGERDGGSEIQ. The S5 DRBM domain occupies 48–111; that stretch reads IQDRVVQIRR…EKARHAMFDV (64 aa).

It belongs to the universal ribosomal protein uS5 family. As to quaternary structure, part of the 30S ribosomal subunit. Contacts proteins S4 and S8.

Its function is as follows. With S4 and S12 plays an important role in translational accuracy. Functionally, located at the back of the 30S subunit body where it stabilizes the conformation of the head with respect to the body. This is Small ribosomal subunit protein uS5 from Rubrobacter xylanophilus (strain DSM 9941 / JCM 11954 / NBRC 16129 / PRD-1).